The following is a 304-amino-acid chain: Non-specific ribonucleoside hydrolase RihC (304 aa).

His-233 is an active-site residue.

The protein belongs to the IUNH family. RihC subfamily.

Functionally, hydrolyzes both purine and pyrimidine ribonucleosides with a broad-substrate specificity. The chain is Non-specific ribonucleoside hydrolase RihC from Escherichia coli O139:H28 (strain E24377A / ETEC).